We begin with the raw amino-acid sequence, 243 residues long: Flavin-dependent thymidylate synthase (243 aa).

A ThyX domain is found at valine 2–lysine 207. FAD contacts are provided by residues serine 56, arginine 80–arginine 82, and glutamine 88. DUMP is bound by residues glutamine 77–arginine 80, glutamine 88–arginine 92, and arginine 146. A ThyX motif motif is present at residues arginine 80–serine 90. Residues asparagine 162–arginine 164 and histidine 168 each bind FAD. Arginine 173 lines the dUMP pocket. The active-site Involved in ionization of N3 of dUMP, leading to its activation is arginine 173.

Belongs to the thymidylate synthase ThyX family. Homotetramer. Requires FAD as cofactor.

It carries out the reaction dUMP + (6R)-5,10-methylene-5,6,7,8-tetrahydrofolate + NADPH + H(+) = dTMP + (6S)-5,6,7,8-tetrahydrofolate + NADP(+). It functions in the pathway pyrimidine metabolism; dTTP biosynthesis. In terms of biological role, catalyzes the reductive methylation of 2'-deoxyuridine-5'-monophosphate (dUMP) to 2'-deoxythymidine-5'-monophosphate (dTMP) while utilizing 5,10-methylenetetrahydrofolate (mTHF) as the methyl donor, and NADPH and FADH(2) as the reductant. In Pyrococcus horikoshii (strain ATCC 700860 / DSM 12428 / JCM 9974 / NBRC 100139 / OT-3), this protein is Flavin-dependent thymidylate synthase.